The following is a 1163-amino-acid chain: Carbamoyl phosphate synthase large chain (1163 aa).

Residues 1–456 (MPKRQDIKSI…SLQKALRGLE (456 aa)) form a carboxyphosphate synthetic domain region. Arginine 129 is an ATP binding site. Positions 148 to 170 (LANATDIKDHDRKSHEAERSALK) are disordered. Residues 153–170 (DIKDHDRKSHEAERSALK) are compositionally biased toward basic and acidic residues. One can recognise an ATP-grasp 1 domain in the interval 185–381 (LENQWNLGEG…IAKIAAKLAV (197 aa)). ATP contacts are provided by arginine 222, glycine 228, glycine 229, glutamate 261, valine 263, glutamate 268, glycine 294, valine 295, histidine 296, glutamine 338, and glutamate 352. Glutamine 338, glutamate 352, and asparagine 354 together coordinate Mg(2+). Residues glutamine 338, glutamate 352, and asparagine 354 each coordinate Mn(2+). Positions 457 to 614 (TGLTGLDEIE…PFVGAARSEA (158 aa)) are oligomerization domain. The segment at 615-1026 (QVSDRKKVVI…AFAKSQLGAG (412 aa)) is carbamoyl phosphate synthetic domain. One can recognise an ATP-grasp 2 domain in the interval 743-955 (QKLLMKLDLN…IAKIAARVMA (213 aa)). 10 residues coordinate ATP: arginine 779, serine 839, leucine 841, glutamate 846, glycine 871, isoleucine 872, histidine 873, serine 874, glutamine 914, and glutamate 926. Residues glutamine 914, glutamate 926, and asparagine 928 each contribute to the Mg(2+) site. Glutamine 914, glutamate 926, and asparagine 928 together coordinate Mn(2+). One can recognise an MGS-like domain in the interval 1027–1163 (VDLPRDGTVF…VRPLQSYFET (137 aa)). The tract at residues 1027 to 1163 (VDLPRDGTVF…VRPLQSYFET (137 aa)) is allosteric domain.

Belongs to the CarB family. Composed of two chains; the small (or glutamine) chain promotes the hydrolysis of glutamine to ammonia, which is used by the large (or ammonia) chain to synthesize carbamoyl phosphate. Tetramer of heterodimers (alpha,beta)4. The cofactor is Mg(2+). Mn(2+) serves as cofactor.

It carries out the reaction hydrogencarbonate + L-glutamine + 2 ATP + H2O = carbamoyl phosphate + L-glutamate + 2 ADP + phosphate + 2 H(+). The enzyme catalyses hydrogencarbonate + NH4(+) + 2 ATP = carbamoyl phosphate + 2 ADP + phosphate + 2 H(+). The protein operates within amino-acid biosynthesis; L-arginine biosynthesis; carbamoyl phosphate from bicarbonate: step 1/1. Its pathway is pyrimidine metabolism; UMP biosynthesis via de novo pathway; (S)-dihydroorotate from bicarbonate: step 1/3. Functionally, large subunit of the glutamine-dependent carbamoyl phosphate synthetase (CPSase). CPSase catalyzes the formation of carbamoyl phosphate from the ammonia moiety of glutamine, carbonate, and phosphate donated by ATP, constituting the first step of 2 biosynthetic pathways, one leading to arginine and/or urea and the other to pyrimidine nucleotides. The large subunit (synthetase) binds the substrates ammonia (free or transferred from glutamine from the small subunit), hydrogencarbonate and ATP and carries out an ATP-coupled ligase reaction, activating hydrogencarbonate by forming carboxy phosphate which reacts with ammonia to form carbamoyl phosphate. The polypeptide is Carbamoyl phosphate synthase large chain (Rhizobium meliloti (strain 1021) (Ensifer meliloti)).